A 119-amino-acid chain; its full sequence is Immunoglobulin heavy variable 2-70D (119 aa).

The N-terminal stretch at 1 to 19 is a signal peptide; that stretch reads MDILCSTLLLLTVPSWVLS. The residue at position 20 (Q20) is a Pyrrolidone carboxylic acid. Residues 20–44 form a framework-1 region; the sequence is QVTLKESGPALVKPTQTLTLTCTFS. An Ig-like domain is found at 20–119; that stretch reads QVTLKESGPA…DTATYYCARI (100 aa). The cysteines at positions 41 and 116 are disulfide-linked. A complementarity-determining-1 region spans residues 45-54; it reads GFSLSTSGMR. Residues 55–71 are framework-2; it reads VSWIRQPPGKALEWLAR. The segment at 72 to 78 is complementarity-determining-2; that stretch reads IDWDDDK. Positions 79-116 are framework-3; the sequence is FYSTSLKTRLTISKDTSKNQVVLTMTNMDPVDTATYYC. Residues 117-119 form a complementarity-determining-3 region; sequence ARI.

As to quaternary structure, immunoglobulins are composed of two identical heavy chains and two identical light chains; disulfide-linked.

Its subcellular location is the secreted. It localises to the cell membrane. V region of the variable domain of immunoglobulin heavy chains that participates in the antigen recognition. Immunoglobulins, also known as antibodies, are membrane-bound or secreted glycoproteins produced by B lymphocytes. In the recognition phase of humoral immunity, the membrane-bound immunoglobulins serve as receptors which, upon binding of a specific antigen, trigger the clonal expansion and differentiation of B lymphocytes into immunoglobulins-secreting plasma cells. Secreted immunoglobulins mediate the effector phase of humoral immunity, which results in the elimination of bound antigens. The antigen binding site is formed by the variable domain of one heavy chain, together with that of its associated light chain. Thus, each immunoglobulin has two antigen binding sites with remarkable affinity for a particular antigen. The variable domains are assembled by a process called V-(D)-J rearrangement and can then be subjected to somatic hypermutations which, after exposure to antigen and selection, allow affinity maturation for a particular antigen. This chain is Immunoglobulin heavy variable 2-70D, found in Homo sapiens (Human).